A 290-amino-acid polypeptide reads, in one-letter code: Fructose-1,6-bisphosphatase class 1 (290 aa).

Residues Glu-78, Asp-96, Leu-98, and Asp-99 each contribute to the Mg(2+) site. Residues 99 to 102, Tyr-201, and Lys-226 contribute to the substrate site; that span reads DGSS. Mg(2+) is bound at residue Glu-232.

It belongs to the FBPase class 1 family. Homotetramer. Mg(2+) is required as a cofactor.

Its subcellular location is the cytoplasm. The catalysed reaction is beta-D-fructose 1,6-bisphosphate + H2O = beta-D-fructose 6-phosphate + phosphate. Its pathway is carbohydrate biosynthesis; gluconeogenesis. The chain is Fructose-1,6-bisphosphatase class 1 from Helicobacter pylori (strain J99 / ATCC 700824) (Campylobacter pylori J99).